The following is a 1411-amino-acid chain: DNA-directed RNA polymerase subunit beta' (1411 aa).

Zn(2+) is bound by residues Cys70, Cys72, Cys85, and Cys88. Mg(2+) contacts are provided by Asp460, Asp462, and Asp464. Cys814, Cys889, Cys896, and Cys899 together coordinate Zn(2+). Residues 1387-1399 (RSTSSGTEITSPS) are compositionally biased toward polar residues. Positions 1387–1411 (RSTSSGTEITSPSKDAIPLGSKVGF) are disordered.

It belongs to the RNA polymerase beta' chain family. The RNAP catalytic core consists of 2 alpha, 1 beta, 1 beta' and 1 omega subunit. When a sigma factor is associated with the core the holoenzyme is formed, which can initiate transcription. It depends on Mg(2+) as a cofactor. Zn(2+) is required as a cofactor.

The catalysed reaction is RNA(n) + a ribonucleoside 5'-triphosphate = RNA(n+1) + diphosphate. DNA-dependent RNA polymerase catalyzes the transcription of DNA into RNA using the four ribonucleoside triphosphates as substrates. This Xylella fastidiosa (strain M12) protein is DNA-directed RNA polymerase subunit beta'.